A 454-amino-acid chain; its full sequence is Aquaglyceroporin-9 (454 aa).

The Cytoplasmic portion of the chain corresponds to 1 to 186 (MEGGLRSPLN…RHTMREPFSE (186 aa)). A helical membrane pass occupies residues 187–207 (FFGVFILILFGDGVVAQVVLS). Over 208–216 (SGERGSYQS) the chain is Extracellular. Residues 217 to 237 (ISWGWGIGVMLGVYASGVSGA) traverse the membrane as a helical segment. At 238-257 (HINPAVTFANCIFRKFPWRK) the chain is on the cytoplasmic side. The NPA 1 signature appears at 240-242 (NPA). Residues 258 to 278 (FPIYMLAQVLGAMCASGVVYA) traverse the membrane as a helical segment. Residues 279–316 (NYKSAIDMFEGGNNIRTVGLNTSSAGIFCTYPAPFMTK) lie on the Extracellular side of the membrane. Residue asparagine 299 is glycosylated (N-linked (GlcNAc...) asparagine). A helical transmembrane segment spans residues 317–337 (TGQFFSEFVASTILMFCIYAL). Topologically, residues 338 to 351 (QDNGNLGSGNLTPL) are cytoplasmic. The chain crosses the membrane as a helical span at residues 352–372 (GLFFVIFGIGACFGWETGYAI). The NPA 2 motif lies at 373 to 375 (NLA). At 373 to 403 (NLARDFGPRLMSYFLGYGHEVWSAGNYYFWV) the chain is on the extracellular side. A helical membrane pass occupies residues 404 to 424 (PMVAPFIGCLFGGWLYDVFIF). The Cytoplasmic portion of the chain corresponds to 425 to 454 (TGESPINTPWMGLKRLMPGGLGSKKVDSKV).

It belongs to the MIP/aquaporin (TC 1.A.8) family.

The protein localises to the membrane. The catalysed reaction is H2O(in) = H2O(out). It catalyses the reaction glycerol(in) = glycerol(out). In terms of biological role, water channel required to facilitate the transport of water across membranes. May play a role in the vegetative growth and pathogenicity. The chain is Aquaglyceroporin-9 from Botryotinia fuckeliana (strain B05.10) (Noble rot fungus).